The primary structure comprises 164 residues: Endoribonuclease YbeY (164 aa).

3 residues coordinate Zn(2+): histidine 111, histidine 115, and histidine 121. A disordered region spans residues 140–164; that stretch reads ELGHPDPYADDDAQKHSTVTIKDSE. The segment covering 155-164 has biased composition (polar residues); sequence HSTVTIKDSE.

This sequence belongs to the endoribonuclease YbeY family. Zn(2+) is required as a cofactor.

The protein localises to the cytoplasm. In terms of biological role, single strand-specific metallo-endoribonuclease involved in late-stage 70S ribosome quality control and in maturation of the 3' terminus of the 16S rRNA. This Pseudomonas fluorescens (strain SBW25) protein is Endoribonuclease YbeY.